Consider the following 75-residue polypeptide: uncharacterized protein (75 aa).

4Fe-4S ferredoxin-type domains follow at residues 2 to 30 (SHTI…KGEG) and 37 to 68 (DWYW…KEEP). Residues Cys10 and Cys16 each coordinate [3Fe-4S] cluster. [4Fe-4S] cluster contacts are provided by Cys20, Cys46, Cys49, and Cys52. Cys56 is a [3Fe-4S] cluster binding site.

The cofactor is [4Fe-4S] cluster. [3Fe-4S] cluster is required as a cofactor.

It is found in the plastid. The protein localises to the chloroplast. This is an uncharacterized protein from Porphyra purpurea (Red seaweed).